Reading from the N-terminus, the 238-residue chain is tRNA (guanine-N(1)-)-methyltransferase (238 aa).

S-adenosyl-L-methionine-binding positions include glycine 110 and 129–134 (LGDFIL).

It belongs to the RNA methyltransferase TrmD family. As to quaternary structure, homodimer.

The protein localises to the cytoplasm. The catalysed reaction is guanosine(37) in tRNA + S-adenosyl-L-methionine = N(1)-methylguanosine(37) in tRNA + S-adenosyl-L-homocysteine + H(+). Its function is as follows. Specifically methylates guanosine-37 in various tRNAs. The sequence is that of tRNA (guanine-N(1)-)-methyltransferase from Clostridium botulinum (strain Eklund 17B / Type B).